Here is a 213-residue protein sequence, read N- to C-terminus: GTP cyclohydrolase 1 (213 aa).

The segment at 1–27 is disordered; it reads MDDVVKSLLQRTTSSLTKPAPARPSRE. Cys100, His103, and Cys172 together coordinate Zn(2+).

The protein belongs to the GTP cyclohydrolase I family. As to quaternary structure, homomer.

It catalyses the reaction GTP + H2O = 7,8-dihydroneopterin 3'-triphosphate + formate + H(+). Its pathway is cofactor biosynthesis; 7,8-dihydroneopterin triphosphate biosynthesis; 7,8-dihydroneopterin triphosphate from GTP: step 1/1. The sequence is that of GTP cyclohydrolase 1 from Beijerinckia indica subsp. indica (strain ATCC 9039 / DSM 1715 / NCIMB 8712).